Consider the following 491-residue polypeptide: Protein nucleotidyltransferase YdiU (491 aa).

The ATP site is built by Gly-88, Gly-90, Arg-91, Lys-111, Asp-123, Gly-124, Arg-174, and Arg-181. Catalysis depends on Asp-250, which acts as the Proton acceptor. Residues Asn-251 and Asp-260 each coordinate Mg(2+). An ATP-binding site is contributed by Asp-260. Residues 466-484 show a composition bias toward basic and acidic residues; it reads DDQPDRADYAEPPQPEERV. The interval 466–491 is disordered; that stretch reads DDQPDRADYAEPPQPEERVLQTFCGT.

The protein belongs to the SELO family. The cofactor is Mg(2+). Requires Mn(2+) as cofactor.

The enzyme catalyses L-seryl-[protein] + ATP = 3-O-(5'-adenylyl)-L-seryl-[protein] + diphosphate. It catalyses the reaction L-threonyl-[protein] + ATP = 3-O-(5'-adenylyl)-L-threonyl-[protein] + diphosphate. It carries out the reaction L-tyrosyl-[protein] + ATP = O-(5'-adenylyl)-L-tyrosyl-[protein] + diphosphate. The catalysed reaction is L-histidyl-[protein] + UTP = N(tele)-(5'-uridylyl)-L-histidyl-[protein] + diphosphate. The enzyme catalyses L-seryl-[protein] + UTP = O-(5'-uridylyl)-L-seryl-[protein] + diphosphate. It catalyses the reaction L-tyrosyl-[protein] + UTP = O-(5'-uridylyl)-L-tyrosyl-[protein] + diphosphate. Functionally, nucleotidyltransferase involved in the post-translational modification of proteins. It can catalyze the addition of adenosine monophosphate (AMP) or uridine monophosphate (UMP) to a protein, resulting in modifications known as AMPylation and UMPylation. This is Protein nucleotidyltransferase YdiU from Bradyrhizobium sp. (strain ORS 278).